Consider the following 384-residue polypeptide: Cobalt-precorrin-5B C(1)-methyltransferase (384 aa).

Belongs to the CbiD family.

The enzyme catalyses Co-precorrin-5B + S-adenosyl-L-methionine = Co-precorrin-6A + S-adenosyl-L-homocysteine. The protein operates within cofactor biosynthesis; adenosylcobalamin biosynthesis; cob(II)yrinate a,c-diamide from sirohydrochlorin (anaerobic route): step 6/10. Its function is as follows. Catalyzes the methylation of C-1 in cobalt-precorrin-5B to form cobalt-precorrin-6A. The sequence is that of Cobalt-precorrin-5B C(1)-methyltransferase from Marinomonas sp. (strain MWYL1).